The chain runs to 132 residues: Large ribosomal subunit protein bL17 (132 aa).

The protein belongs to the bacterial ribosomal protein bL17 family. Part of the 50S ribosomal subunit. Contacts protein L32.

The sequence is that of Large ribosomal subunit protein bL17 from Saccharophagus degradans (strain 2-40 / ATCC 43961 / DSM 17024).